We begin with the raw amino-acid sequence, 380 residues long: Cytochrome b (380 aa).

A run of 4 helical transmembrane segments spans residues 34 to 54, 78 to 99, 114 to 134, and 179 to 199; these read FGSLLGICLMTQILTGLLLAM, WLIRNLHANGASLFFICIYLHI, WNTGVILLLTLMATAFVGYVL, and FFALHFLLPFIIAGLTLIHLT. The heme b site is built by histidine 84 and histidine 98. Heme b is bound by residues histidine 183 and histidine 197. Histidine 202 provides a ligand contact to a ubiquinone. 4 consecutive transmembrane segments (helical) span residues 227–247, 289–309, 321–341, and 348–368; these read TKDILGFIILLLPLMTLAMFA, LGGVLALAASVLVLFLAPFLH, LSQLLFWTLVANLFILTWIGS, and FIITGQLASLTYFTILLILFP.

It belongs to the cytochrome b family. As to quaternary structure, the cytochrome bc1 complex contains 11 subunits: 3 respiratory subunits (MT-CYB, CYC1 and UQCRFS1), 2 core proteins (UQCRC1 and UQCRC2) and 6 low-molecular weight proteins (UQCRH/QCR6, UQCRB/QCR7, UQCRQ/QCR8, UQCR10/QCR9, UQCR11/QCR10 and a cleavage product of UQCRFS1). This cytochrome bc1 complex then forms a dimer. Requires heme b as cofactor.

Its subcellular location is the mitochondrion inner membrane. Functionally, component of the ubiquinol-cytochrome c reductase complex (complex III or cytochrome b-c1 complex) that is part of the mitochondrial respiratory chain. The b-c1 complex mediates electron transfer from ubiquinol to cytochrome c. Contributes to the generation of a proton gradient across the mitochondrial membrane that is then used for ATP synthesis. The chain is Cytochrome b (MT-CYB) from Aphanotriccus audax (Black-billed flycatcher).